A 107-amino-acid polypeptide reads, in one-letter code: Large ribosomal subunit protein bL21 (107 aa).

Belongs to the bacterial ribosomal protein bL21 family. Part of the 50S ribosomal subunit. Contacts protein L20.

Functionally, this protein binds to 23S rRNA in the presence of protein L20. This chain is Large ribosomal subunit protein bL21, found in Chlamydia trachomatis serovar L2 (strain ATCC VR-902B / DSM 19102 / 434/Bu).